Consider the following 80-residue polypeptide: NAD(P)H-quinone oxidoreductase subunit O (80 aa).

It belongs to the complex I NdhO subunit family. As to quaternary structure, NDH-1 can be composed of about 15 different subunits; different subcomplexes with different compositions have been identified which probably have different functions.

The protein localises to the cellular thylakoid membrane. It catalyses the reaction a plastoquinone + NADH + (n+1) H(+)(in) = a plastoquinol + NAD(+) + n H(+)(out). The enzyme catalyses a plastoquinone + NADPH + (n+1) H(+)(in) = a plastoquinol + NADP(+) + n H(+)(out). In terms of biological role, NDH-1 shuttles electrons from an unknown electron donor, via FMN and iron-sulfur (Fe-S) centers, to quinones in the respiratory and/or the photosynthetic chain. The immediate electron acceptor for the enzyme in this species is believed to be plastoquinone. Couples the redox reaction to proton translocation, and thus conserves the redox energy in a proton gradient. Cyanobacterial NDH-1 also plays a role in inorganic carbon-concentration. The polypeptide is NAD(P)H-quinone oxidoreductase subunit O (Prochlorococcus marinus (strain MIT 9515)).